The chain runs to 372 residues: Citrate synthase 2 (372 aa).

Histidine 257 is a catalytic residue. Serine 284 is subject to Phosphoserine. The active site involves aspartate 308.

It belongs to the citrate synthase family. In terms of assembly, homodimer.

It catalyses the reaction oxaloacetate + acetyl-CoA + H2O = citrate + CoA + H(+). It participates in carbohydrate metabolism; tricarboxylic acid cycle; isocitrate from oxaloacetate: step 1/2. Its function is as follows. Might regulate the synthesis and function of enzymes involved in later enzymatic steps of Krebs cycle. Loss in activity results in sporulation defect. The polypeptide is Citrate synthase 2 (citZ) (Bacillus subtilis (strain 168)).